The chain runs to 388 residues: Cytochrome b (388 aa).

Helical transmembrane passes span 32 to 52 (FGSL…TLAM), 76 to 98 (WLIR…LHVG), 113 to 133 (TWTI…LGYV), and 179 to 199 (FFAL…MHLI). Heme b-binding residues include His-82 and His-96. Residues His-183 and His-197 each coordinate heme b. Residue His-202 coordinates a ubiquinone. 4 helical membrane passes run 226 to 246 (FIFK…IFIF), 290 to 310 (LLGV…PITD), 322 to 342 (LSKI…QLGA), and 349 to 369 (FIEF…IIVP).

It belongs to the cytochrome b family. As to quaternary structure, fungal cytochrome b-c1 complex contains 10 subunits; 3 respiratory subunits, 2 core proteins and 5 low-molecular weight proteins. Cytochrome b-c1 complex is a homodimer. The cofactor is heme b.

Its subcellular location is the mitochondrion inner membrane. In terms of biological role, component of the ubiquinol-cytochrome c reductase complex (complex III or cytochrome b-c1 complex) that is part of the mitochondrial respiratory chain. The b-c1 complex mediates electron transfer from ubiquinol to cytochrome c. Contributes to the generation of a proton gradient across the mitochondrial membrane that is then used for ATP synthesis. This Zymoseptoria tritici (Speckled leaf blotch fungus) protein is Cytochrome b (cob).